Here is a 165-residue protein sequence, read N- to C-terminus: MSSRSRSTFLAISFFVLIDWVSKLAVLLYRGNLPDARPILYQYSWGKLIFCICPTFNEGAAFGIFSKYKYFLFAIRIAIILGILAFLFLRKKRTSPSIRFSLILLCSGAIGNVGDILFYRHVVDFISIGFKRWYFPTFNFADIFISLGTFIFVYKLYFPTKQKIK.

The next 3 membrane-spanning stretches (helical) occupy residues 9-29 (FLAI…VLLY), 69-89 (KYFL…FLFL), and 98-118 (IRFS…DILF). Catalysis depends on residues Asp124 and Asp142. The chain crosses the membrane as a helical span at residues 133-153 (WYFPTFNFADIFISLGTFIFV).

It belongs to the peptidase A8 family.

It is found in the cell inner membrane. The enzyme catalyses Release of signal peptides from bacterial membrane prolipoproteins. Hydrolyzes -Xaa-Yaa-Zaa-|-(S,diacylglyceryl)Cys-, in which Xaa is hydrophobic (preferably Leu), and Yaa (Ala or Ser) and Zaa (Gly or Ala) have small, neutral side chains.. The protein operates within protein modification; lipoprotein biosynthesis (signal peptide cleavage). In terms of biological role, this protein specifically catalyzes the removal of signal peptides from prolipoproteins. In Chlamydia caviae (strain ATCC VR-813 / DSM 19441 / 03DC25 / GPIC) (Chlamydophila caviae), this protein is Lipoprotein signal peptidase.